The following is a 318-amino-acid chain: Ribosomal RNA small subunit methyltransferase H (318 aa).

S-adenosyl-L-methionine-binding positions include 37-39 (GGH), D56, Y83, D104, and Q111. Residues 293-318 (EEEIAENRRAAPARLRGAQRIREDAE) form a disordered region.

Belongs to the methyltransferase superfamily. RsmH family.

Its subcellular location is the cytoplasm. The catalysed reaction is cytidine(1402) in 16S rRNA + S-adenosyl-L-methionine = N(4)-methylcytidine(1402) in 16S rRNA + S-adenosyl-L-homocysteine + H(+). Functionally, specifically methylates the N4 position of cytidine in position 1402 (C1402) of 16S rRNA. The protein is Ribosomal RNA small subunit methyltransferase H of Streptomyces avermitilis (strain ATCC 31267 / DSM 46492 / JCM 5070 / NBRC 14893 / NCIMB 12804 / NRRL 8165 / MA-4680).